A 468-amino-acid chain; its full sequence is Trehalose-2-sulfate acyltransferase PapA2 (468 aa).

This sequence belongs to the PapA acyltransferase family.

It catalyses the reaction 2-O-sulfo-alpha,alpha-trehalose + hexadecanoyl-CoA = 2-O-sulfo-2'-O-hexadecanoyl-alpha,alpha-trehalose + CoA. Functionally, catalyzes the acylation of trehalose-2-sulfate by adding the palmitoyl group at the 2'-position to yield the intermediate trehalose-2-sulfate-2'-palmitate (SL659). The chain is Trehalose-2-sulfate acyltransferase PapA2 (papA2) from Mycobacterium tuberculosis (strain ATCC 25177 / H37Ra).